Reading from the N-terminus, the 185-residue chain is Peptidyl-tRNA hydrolase (185 aa).

Tyr14 provides a ligand contact to tRNA. Residue His19 is the Proton acceptor of the active site. TRNA is bound by residues Tyr64, Asn66, and Asn112.

The protein belongs to the PTH family. As to quaternary structure, monomer.

It localises to the cytoplasm. It catalyses the reaction an N-acyl-L-alpha-aminoacyl-tRNA + H2O = an N-acyl-L-amino acid + a tRNA + H(+). Its function is as follows. Hydrolyzes ribosome-free peptidyl-tRNAs (with 1 or more amino acids incorporated), which drop off the ribosome during protein synthesis, or as a result of ribosome stalling. Catalyzes the release of premature peptidyl moieties from peptidyl-tRNA molecules trapped in stalled 50S ribosomal subunits, and thus maintains levels of free tRNAs and 50S ribosomes. This chain is Peptidyl-tRNA hydrolase, found in Lactobacillus delbrueckii subsp. bulgaricus (strain ATCC 11842 / DSM 20081 / BCRC 10696 / JCM 1002 / NBRC 13953 / NCIMB 11778 / NCTC 12712 / WDCM 00102 / Lb 14).